We begin with the raw amino-acid sequence, 159 residues long: Cytochrome c-type biogenesis protein CcmE (159 aa).

The Cytoplasmic portion of the chain corresponds to 1 to 8; the sequence is MNLRRKNR. The helical; Signal-anchor for type II membrane protein transmembrane segment at 9–29 threads the bilayer; it reads LWVVCAVLAGLGLTTALVLYA. Topologically, residues 30–159 are periplasmic; it reads LRANIDLFYT…PQRADKDTSS (130 aa). Positions 129–159 are disordered; the sequence is KHDENYTPPEVEKAMQENHRRPQRADKDTSS. Heme-binding residues include H130 and Y134.

It belongs to the CcmE/CycJ family.

It localises to the cell inner membrane. In terms of biological role, heme chaperone required for the biogenesis of c-type cytochromes. Transiently binds heme delivered by CcmC and transfers the heme to apo-cytochromes in a process facilitated by CcmF and CcmH. This chain is Cytochrome c-type biogenesis protein CcmE, found in Salmonella typhimurium (strain LT2 / SGSC1412 / ATCC 700720).